The primary structure comprises 1516 residues: MSNLRRFSRSLAVAALVLLPFAAVQAEDTVEPSGYTPMAGESFFLLADSSFATDEEARVRLEAPGRDYRRYRMEPYGGVDVRLYRIEQPLEFLKRQKNLHRVLAEGQFKGEGLSNTLAYLWDNWYRKSRRVMQRAFSYESRQQVTEAVPELKMGNAMTAPTPYDAQPQYAPIPGLPLVSQFRYPLWDAKPIEPPQDVKLAGSSSEFINVVPGNVYIPLGKLKPGLYLVEALVGKYRATTVVFVSNSVAVSKVAGDELLVWTARKHEGTPVPDTKVLWTDGLGVMSSGNTDADGLLRLKHASPERSYVIGEDREGGVFVSENFYYDSEIYDTKIYAFTDRPLYRPGDWVSLKMVGREFKDARQSQAAASAPVRLSVIDASGTVLQSLDLRFDAKSGANGRFQLPENAVAGGYELRFDYRGQTYSSAFRVAEYIKPHFEVALDLAKPDFKTAEPVKGEIVLLYPDGKPVANARLQLSLRAQQLSMVDNELQYLGQFPVELSSTELTTDGKGRAAIELPPAEKPSRYMLTIFASDGAAYRVKTSKEILIERGAARYRLSAPQRFSAAGEKVEFSYASEQPTPLKPSSYQWIRLEDRATDSGPVADGRFALTFERPGTYSVELRDDKGQLLGATGHSVSGEGVKSVPGTVEVVFDKPEYRTGEEASALITFPEPVEDALLSLERDKVEATALLSKGADWLRLEKLNPTQYRVWIPVREEFSPNLTFSVLYTKGGDYSFQNAGIKVGMPQVEIDIATDKERYEPGETVTVTLATRFAGKPVSSHLTVSVVDEMVYALQAEIAPGIDQFFYHPRRNNVRTSASLAFISYDVALPGSTSAPGRANRSERGVKVLERPRREDVDTAAWQPELVTDAQGKASFSFRMPDSLTRWRITARAIDDNGQVGQKKQFLRSEKPLYLKWSGPTRFRQGDQPDLGLFVFNQGEQPVKAELLSGPPGSQRSQTLELAKGVNYIPLAQQPLSDGDWSAELRQDGQVRDRLAVRFNLLADGWQVEQMQNLSLAAASNPLQLPADARDVRLRLADGPAAAYLGNLDDLLEYPYGGVEQTASQLLPLSIAYPALAGGEPRIRDRLRLIMQNSRLRLVQMAGPDAWFAWWGGDVDGDAFLTAYAYYADWYASRALEIQLPAEHWQRILEPYAKQATQTPLLQRALILAFARDMQLPVNTLLGGLLNDLANAGEGQARAEPLEADDGLVLGDPDSAVGLAAARVLAVDLARQLRVAVPAPLAAQAETATQRLREAGLPFTDALLASRSAVDGQQASALLQRLAPAQSTLERALALTWLQGALAQAPQGKLPQPPKDWQAQRGASGETYWQWRGRGIPSWVDLDEAPARPLPVALSYRSAQAPSGQLPVQISRRLLRLVPGEGAFEFKVEEVGDKPLSSDELYLDEVTLNVPEDTALRYGMLELPLPPGADVERTTWGIKISGLAGDEATTLERARNEPGELFYGVPVDSLSGEQRFRHLVRFSQKGSFNLPPARYLRLYAPEQQALEAKPALAKVKVE.

The first 26 residues, 1-26 (MSNLRRFSRSLAVAALVLLPFAAVQA), serve as a signal peptide directing secretion.

It belongs to the protease inhibitor I39 (alpha-2-macroglobulin) family. Bacterial alpha-2-macroglobulin subfamily.

The sequence is that of Alpha-2-macroglobulin homolog from Pseudomonas aeruginosa (strain ATCC 15692 / DSM 22644 / CIP 104116 / JCM 14847 / LMG 12228 / 1C / PRS 101 / PAO1).